The chain runs to 166 residues: Photosystem I assembly protein Ycf3 (166 aa).

TPR repeat units lie at residues 35–68 (AFVYYRDGMSAQAEGEYAEALQNYAQAMRLEVDP), 72–105 (SFIFYNIGLIHTSNGEHTKALEYYYQALDRNPSL), and 120–153 (GEQALAAGNIPDSETLFEKAAEYWKEAIRLAPLN).

The protein belongs to the Ycf3 family.

The protein resides in the plastid. Its subcellular location is the chloroplast thylakoid membrane. Functionally, essential for the assembly of the photosystem I (PSI) complex. May act as a chaperone-like factor to guide the assembly of the PSI subunits. This is Photosystem I assembly protein Ycf3 from Ostreococcus tauri.